The primary structure comprises 1472 residues: Vacuolar cation-transporting ATPase YPK9 (1472 aa).

Met1 bears the N-acetylmethionine mark. Polar residues-rich tracts occupy residues 1 to 12 (MDIPSSNQIQHG) and 72 to 87 (SFQS…SGNL). Disordered stretches follow at residues 1 to 32 (MDIP…TATT), 71 to 115 (HSFQ…SRNP), and 179 to 273 (AKSY…DDVH). Residues 1–293 (MDIPSSNQIQ…YHEKFYPQYA (293 aa)) are Cytoplasmic-facing. Thr95 carries the post-translational modification Phosphothreonine. Low complexity-rich tracts occupy residues 103 to 115 (SSAE…SRNP) and 211 to 222 (SATHSSSSLSRY). Ser108 is modified (phosphoserine). The span at 234–243 (SQTDEILEDE) shows a compositional bias: acidic residues. Residues 294 to 315 (PNLHYQRFYIAEEDLVIGIAAY) traverse the membrane as a helical segment. Over 316–321 (QTSKFW) the chain is Vacuolar. Residues 322-344 (YIIYNLCCFLTFGLVYLLTRWLP) traverse the membrane as a helical segment. Topologically, residues 345–488 (HLKVKLYGVK…INLRMKTTSE (144 aa)) are cytoplasmic. A helical transmembrane segment spans residues 489 to 511 (ILFNEVLHPFYVFQVFSIILWGI). Residues 512–514 (DEY) lie on the Vacuolar side of the membrane. Residues 515-533 (YYYAACIFLISVLSIFDSL) form a helical membrane-spanning segment. At 534 to 693 (NEQKKVSRNL…PTGFKFYRDS (160 aa)) the chain is on the cytoplasmic side. Residues 694-713 (FKYIGFMSLIAIFGFCVSCV) form a helical membrane-spanning segment. Residues 714 to 726 (QFIKLGLDKKTMI) are Vacuolar-facing. A helical transmembrane segment spans residues 727 to 748 (LRALDIITIVVPPALPATLTIG). The Cytoplasmic segment spans residues 749–1244 (TNFALSRLKE…ALVTSFACFQ (496 aa)). Residue Asp781 is the 4-aspartylphosphate intermediate of the active site. Phosphoserine is present on residues Ser1117 and Ser1120. 2 residues coordinate Mg(2+): Asp1187 and Asp1191. A helical membrane pass occupies residues 1245–1264 (YMSLYSAIQFITITILYSRG). Residues 1265–1271 (SNLGDFQ) are Vacuolar-facing. The helical transmembrane segment at 1272 to 1289 (FLYIDLLLIVPIAICMSW) threads the bilayer. Residues 1290 to 1307 (SKSYEKIDKKRPSANLVS) are Cytoplasmic-facing. Residues 1308–1331 (PKILVPLLISVFLVFLFQFIPWII) traverse the membrane as a helical segment. Residues 1332 to 1351 (VQKMSWYIKPIVGGDDAVQS) lie on the Vacuolar side of the membrane. A helical transmembrane segment spans residues 1352–1374 (SDNTVLFFVSNFQYILTAIVLSV). Over 1375–1387 (GPPYREPMSKNFE) the chain is Cytoplasmic. The helical transmembrane segment at 1388–1407 (FIVDITVSIGASLLLMTLDT) threads the bilayer. At 1408–1423 (ESYLGKMLQLTPISNS) the chain is on the vacuolar side. Residues 1424–1446 (FTMFIIVWVILNYYAQLYIPPSI) form a helical membrane-spanning segment. Residues 1447-1472 (KGWLKKKKSSKKYKLLIQEEMKLKEV) lie on the Cytoplasmic side of the membrane.

It belongs to the cation transport ATPase (P-type) (TC 3.A.3) family. Type V subfamily.

The protein resides in the vacuole membrane. The enzyme catalyses ATP + H2O = ADP + phosphate + H(+). Its function is as follows. Vacuolar transporter which plays a role in sequestration of divalent heavy metal ions. This Saccharomyces cerevisiae (strain ATCC 204508 / S288c) (Baker's yeast) protein is Vacuolar cation-transporting ATPase YPK9 (YPK9).